The sequence spans 389 residues: 5-hydroxytryptamine receptor 1B (389 aa).

Positions methionine 1–serine 27 are disordered. Residues methionine 1–leucine 45 are Extracellular-facing. The span at serine 16–serine 27 shows a compositional bias: polar residues. N-linked (GlcNAc...) asparagine glycosylation is found at asparagine 24 and asparagine 31. The helical transmembrane segment at proline 46–alanine 71 threads the bilayer. Residues threonine 72–tyrosine 85 are Cytoplasmic-facing. A helical membrane pass occupies residues leucine 86 to valine 110. Topologically, residues threonine 111 to glutamine 118 are extracellular. The chain crosses the membrane as a helical span at residues valine 119–leucine 144. Cysteines 121 and 198 form a disulfide. 2 residues coordinate ergotamine: aspartate 128 and threonine 133. The short motif at aspartate 145–tyrosine 147 is the DRY motif; important for ligand-induced conformation changes and signaling element. The Cytoplasmic segment spans residues aspartate 145–arginine 164. Residues alanine 165–proline 183 form a helical membrane-spanning segment. The Extracellular segment spans residues phenylalanine 184 to histidine 204. An ergotamine-binding site is contributed by valine 200. Residues isoleucine 205–glycine 228 form a helical membrane-spanning segment. Residues arginine 229 to threonine 314 lie on the Cytoplasmic side of the membrane. Residues aspartate 258–serine 271 show a composition bias toward polar residues. The segment at aspartate 258–glycine 281 is disordered. Residues leucine 315 to methionine 336 form a helical membrane-spanning segment. Over proline 337–histidine 346 the chain is Extracellular. A helical transmembrane segment spans residues leucine 347–threonine 369. The NPxxY motif; important for ligand-induced conformation changes and signaling signature appears at asparagine 364–tyrosine 368. Topologically, residues methionine 370–glycine 389 are cytoplasmic. A lipid anchor (S-palmitoyl cysteine) is attached at cysteine 387.

It belongs to the G-protein coupled receptor 1 family. As to quaternary structure, homodimer. Heterodimer with HTR1D. In terms of processing, phosphorylated. Desensitization of the receptor may be mediated by its phosphorylation. Post-translationally, palmitoylated.

The protein localises to the cell membrane. Its function is as follows. G-protein coupled receptor for 5-hydroxytryptamine (serotonin). Also functions as a receptor for ergot alkaloid derivatives, various anxiolytic and antidepressant drugs and other psychoactive substances, such as lysergic acid diethylamide (LSD). Ligand binding causes a conformation change that triggers signaling via guanine nucleotide-binding proteins (G proteins) and modulates the activity of downstream effectors, such as adenylate cyclase. HTR1B is coupled to G(i)/G(o) G alpha proteins and mediates inhibitory neurotransmission by inhibiting adenylate cyclase activity. Arrestin family members inhibit signaling via G proteins and mediate activation of alternative signaling pathways. Regulates the release of 5-hydroxytryptamine, dopamine and acetylcholine in the brain, and thereby affects neural activity, nociceptive processing, pain perception, mood and behavior. Besides, plays a role in vasoconstriction of cerebral arteries. The sequence is that of 5-hydroxytryptamine receptor 1B (HTR1B) from Canis lupus familiaris (Dog).